The sequence spans 339 residues: Ketol-acid reductoisomerase (NADP(+)) (339 aa).

The region spanning 1–182 (MRVYYDRDAD…GGGRSGIIET (182 aa)) is the KARI N-terminal Rossmann domain. NADP(+)-binding positions include 24 to 27 (YGSQ), Lys-48, Ser-51, Thr-53, and 83 to 86 (DELQ). His-108 is a catalytic residue. An NADP(+)-binding site is contributed by Gly-134. Residues 183–328 (NFREECETDL…AKLRAMMPWI (146 aa)) enclose the KARI C-terminal knotted domain. Mg(2+) is bound by residues Asp-191, Glu-195, Glu-227, and Glu-231. Ser-252 is a substrate binding site.

This sequence belongs to the ketol-acid reductoisomerase family. Mg(2+) is required as a cofactor.

The catalysed reaction is (2R)-2,3-dihydroxy-3-methylbutanoate + NADP(+) = (2S)-2-acetolactate + NADPH + H(+). The enzyme catalyses (2R,3R)-2,3-dihydroxy-3-methylpentanoate + NADP(+) = (S)-2-ethyl-2-hydroxy-3-oxobutanoate + NADPH + H(+). Its pathway is amino-acid biosynthesis; L-isoleucine biosynthesis; L-isoleucine from 2-oxobutanoate: step 2/4. It participates in amino-acid biosynthesis; L-valine biosynthesis; L-valine from pyruvate: step 2/4. Functionally, involved in the biosynthesis of branched-chain amino acids (BCAA). Catalyzes an alkyl-migration followed by a ketol-acid reduction of (S)-2-acetolactate (S2AL) to yield (R)-2,3-dihydroxy-isovalerate. In the isomerase reaction, S2AL is rearranged via a Mg-dependent methyl migration to produce 3-hydroxy-3-methyl-2-ketobutyrate (HMKB). In the reductase reaction, this 2-ketoacid undergoes a metal-dependent reduction by NADPH to yield (R)-2,3-dihydroxy-isovalerate. This Mesorhizobium japonicum (strain LMG 29417 / CECT 9101 / MAFF 303099) (Mesorhizobium loti (strain MAFF 303099)) protein is Ketol-acid reductoisomerase (NADP(+)).